The following is a 368-amino-acid chain: Phospho-N-acetylmuramoyl-pentapeptide-transferase (368 aa).

The next 10 membrane-spanning stretches (helical) occupy residues 34–54 (GAVVTGALFVFLFGPWIIDHL), 79–99 (TPTMGGLMILSGLVVSTVLWA), 102–122 (LNPYVWIVLAVTLGFGFVGFY), 140–160 (ARLLIEAAIALVACYALVRLG), 176–196 (LVIKFGWMYVIFGAFVIVGAG), 207–227 (GLAIVPVMIASASFGLIAYLA), 247–267 (LAVLCGAVLGAGLGFLWFNAP), 271–291 (IFMGDTGSLALGGMLGSIAVA), 296–316 (IVLAVIGGLFVLEAVSVIVQV), and 345–365 (QIVIRFWIISVMLALVGLSTL).

Belongs to the glycosyltransferase 4 family. MraY subfamily. Mg(2+) serves as cofactor.

It localises to the cell inner membrane. The catalysed reaction is UDP-N-acetyl-alpha-D-muramoyl-L-alanyl-gamma-D-glutamyl-meso-2,6-diaminopimeloyl-D-alanyl-D-alanine + di-trans,octa-cis-undecaprenyl phosphate = di-trans,octa-cis-undecaprenyl diphospho-N-acetyl-alpha-D-muramoyl-L-alanyl-D-glutamyl-meso-2,6-diaminopimeloyl-D-alanyl-D-alanine + UMP. It participates in cell wall biogenesis; peptidoglycan biosynthesis. In terms of biological role, catalyzes the initial step of the lipid cycle reactions in the biosynthesis of the cell wall peptidoglycan: transfers peptidoglycan precursor phospho-MurNAc-pentapeptide from UDP-MurNAc-pentapeptide onto the lipid carrier undecaprenyl phosphate, yielding undecaprenyl-pyrophosphoryl-MurNAc-pentapeptide, known as lipid I. The chain is Phospho-N-acetylmuramoyl-pentapeptide-transferase from Bradyrhizobium sp. (strain ORS 278).